The primary structure comprises 429 residues: tRNA-2-methylthio-N(6)-dimethylallyladenosine synthase (429 aa).

Residues 1 to 110 (MKFFIKTYGC…IPEAVELSIK (110 aa)) form the MTTase N-terminal domain. 6 residues coordinate [4Fe-4S] cluster: Cys-10, Cys-46, Cys-75, Cys-146, Cys-150, and Cys-153. Residues 132–364 (RNSKHHAWIT…NLQKEINKML (233 aa)) form the Radical SAM core domain. The TRAM domain maps to 366 to 427 (ESYLDKTVEV…AGPLYGDIIK (62 aa)).

This sequence belongs to the methylthiotransferase family. MiaB subfamily. Monomer. [4Fe-4S] cluster serves as cofactor.

Its subcellular location is the cytoplasm. It carries out the reaction N(6)-dimethylallyladenosine(37) in tRNA + (sulfur carrier)-SH + AH2 + 2 S-adenosyl-L-methionine = 2-methylsulfanyl-N(6)-dimethylallyladenosine(37) in tRNA + (sulfur carrier)-H + 5'-deoxyadenosine + L-methionine + A + S-adenosyl-L-homocysteine + 2 H(+). Functionally, catalyzes the methylthiolation of N6-(dimethylallyl)adenosine (i(6)A), leading to the formation of 2-methylthio-N6-(dimethylallyl)adenosine (ms(2)i(6)A) at position 37 in tRNAs that read codons beginning with uridine. The sequence is that of tRNA-2-methylthio-N(6)-dimethylallyladenosine synthase from Thermosipho africanus (strain TCF52B).